The sequence spans 170 residues: Translation machinery-associated protein 16 homolog (170 aa).

The protein belongs to the TMA16 family.

This is Translation machinery-associated protein 16 homolog from Dictyostelium discoideum (Social amoeba).